We begin with the raw amino-acid sequence, 277 residues long: Bifunctional protein FolD (277 aa).

NADP(+) is bound by residues 159–161 (GRS), Ser-184, and Ile-225.

The protein belongs to the tetrahydrofolate dehydrogenase/cyclohydrolase family. In terms of assembly, homodimer.

It carries out the reaction (6R)-5,10-methylene-5,6,7,8-tetrahydrofolate + NADP(+) = (6R)-5,10-methenyltetrahydrofolate + NADPH. The catalysed reaction is (6R)-5,10-methenyltetrahydrofolate + H2O = (6R)-10-formyltetrahydrofolate + H(+). It participates in one-carbon metabolism; tetrahydrofolate interconversion. Catalyzes the oxidation of 5,10-methylenetetrahydrofolate to 5,10-methenyltetrahydrofolate and then the hydrolysis of 5,10-methenyltetrahydrofolate to 10-formyltetrahydrofolate. In Acholeplasma laidlawii (strain PG-8A), this protein is Bifunctional protein FolD.